The sequence spans 151 residues: 3-dehydroquinate dehydratase (151 aa).

Residue tyrosine 26 is the Proton acceptor of the active site. Asparagine 75, histidine 81, and aspartate 88 together coordinate substrate. The active-site Proton donor is the histidine 101. Substrate is bound by residues leucine 102–serine 103 and arginine 112.

This sequence belongs to the type-II 3-dehydroquinase family. In terms of assembly, homododecamer.

The enzyme catalyses 3-dehydroquinate = 3-dehydroshikimate + H2O. It functions in the pathway metabolic intermediate biosynthesis; chorismate biosynthesis; chorismate from D-erythrose 4-phosphate and phosphoenolpyruvate: step 3/7. Functionally, catalyzes a trans-dehydration via an enolate intermediate. The protein is 3-dehydroquinate dehydratase of Shewanella sediminis (strain HAW-EB3).